Here is a 466-residue protein sequence, read N- to C-terminus: Chromogranin-A (466 aa).

The first 18 residues, 1 to 18 (MRSSAALALLLCAGQVFA), serve as a signal peptide directing secretion. Cys35 and Cys56 form a disulfide bridge. The interval 91 to 443 (AQQQQQQQQQ…ANRRAEDQEL (353 aa)) is disordered. Residues 92–111 (QQQQQQQQQQQQQQQQQQQQ) show a composition bias toward low complexity. At Ser114 the chain carries Phosphoserine. The span at 131–155 (KHGDAASEAPSKDTVEKREDSDKGQ) shows a compositional bias: basic and acidic residues. Over residues 177–213 (ESSMMGNSQSPGEDTANNTQSPTSLPSQEHGIPQTTE) the composition is skewed to polar residues. Ser215 carries the phosphoserine modification. Residues 233-247 (KEEEEEEKEEEEEEK) show a composition bias toward acidic residues. The span at 248–259 (EEKAIAREKAGP) shows a compositional bias: basic and acidic residues. Phosphoserine occurs at positions 288 and 312. Residues 305-314 (GKGELEHSQQ) are compositionally biased toward basic and acidic residues. Residue Gly332 is modified to Glycine amide. The span at 351–378 (RLSREWEDKRWSRMDQLAKELTAEKRLE) shows a compositional bias: basic and acidic residues. A phosphoserine mark is found at Ser353 and Ser386. Met387 bears the Methionine sulfoxide mark. Residues 412–440 (SSREDSVEARGDFEEKKEEEGSANRRAED) show a composition bias toward basic and acidic residues. Phosphoserine is present on residues Ser413, Ser417, and Ser433. O-linked (Xyl...) (chondroitin sulfate) serine glycosylation is present at Ser433. Gln441 is modified (pyrrolidone carboxylic acid). Residue Ser447 is modified to Phosphoserine.

This sequence belongs to the chromogranin/secretogranin protein family. Self-interacts; self-assembly is promoted in vitro by chondroitin sulfate attachment which occurs at mildly acidic pH conditions. Interacts with SCG3; this interaction is optimal in conditions mimicking the lumenal milieu of the trans-Golgi network, i.e. pH 5.5 and 10 mM Ca(+2). Interacts with ITPR1 in the secretory granules. O-glycosylated; contains chondroitin sulfate (CS). CS attachment is pH-dependent, being observed at mildly acidic conditions of pH 5 but not at neutral pH, and promotes self-assembly in vitro. In terms of tissue distribution, expressed in the brain and adrenal and pituitary glands.

It is found in the cytoplasmic vesicle. The protein resides in the secretory vesicle. It localises to the neuronal dense core vesicle. The protein localises to the secreted. Strongly inhibits glucose induced insulin release from the pancreas. Functionally, catestatin inhibits catecholamine release from chromaffin cells and noradrenergic neurons by acting as a non-competitive nicotinic cholinergic antagonist. Can induce mast cell migration, degranulation and production of cytokines and chemokines. In terms of biological role, serpinin regulates granule biogenesis in endocrine cells by up-regulating the transcription of protease nexin 1 (SERPINE2) via a cAMP-PKA-SP1 pathway. This leads to inhibition of granule protein degradation in the Golgi complex which in turn promotes granule formation. Serpinin and pGlu-serpinin can enhance both myocardial contractility (inotropy) and relaxation (lusitropy) and this cardio-stimulation requires a beta 1-adrenergic receptor/adenylate cyclase/cAMP/PKA pathway. The polypeptide is Chromogranin-A (Chga) (Rattus norvegicus (Rat)).